A 339-amino-acid chain; its full sequence is Erlin-2 (339 aa).

Topologically, residues 1 to 3 (MAQ) are cytoplasmic. The helical transmembrane segment at 4–24 (LGAVVAVASSFFCASLFSAVH) threads the bilayer. Residues 25 to 339 (KIEEGHIGVY…EPLETATKEN (315 aa)) lie on the Lumenal side of the membrane. Residue N106 is glycosylated (N-linked (GlcNAc...) asparagine). Positions 177-309 (EAIRRNYELM…DIPNMFMDSA (133 aa)) are interaction with ERLIN1. An N6-acetyllysine modification is found at K267.

It belongs to the band 7/mec-2 family. In terms of assembly, forms a heteromeric complex with ERLIN1. In complex with ERLIN1, interacts with RNF170. Interacts with activated ITPR1, independently of the degree of ITPR1 polyubiquitination. Interacts with SCAP, INSIG1, SREBF1 and SREBF2 under cholesterol sufficiency conditions; indicative for an association with the SCAP-SREBP-INSIG complex. Probably part of an AMFR/gp78 and INSIG1-containing ubiquitin ligase complex involved in ERAD of HMGCR. Interacts with TMUB1; TMUB1 bridges the association with AMFR. Interacts with SYVN1 and RNF139. Interacts with TMEM259. Interacts with TMEM41B. In terms of processing, deubiquitinated by USP25; leading to stabilization. Ubiquitous.

Its subcellular location is the endoplasmic reticulum membrane. In terms of biological role, component of the ERLIN1/ERLIN2 complex which mediates the endoplasmic reticulum-associated degradation (ERAD) of inositol 1,4,5-trisphosphate receptors (IP3Rs) such as ITPR1. Promotes sterol-accelerated ERAD of HMGCR probably implicating an AMFR/gp78-containing ubiquitin ligase complex. Involved in regulation of cellular cholesterol homeostasis by regulation the SREBP signaling pathway. May promote ER retention of the SCAP-SREBF complex. The chain is Erlin-2 (ERLIN2) from Homo sapiens (Human).